Consider the following 268-residue polypeptide: 3-deoxy-manno-octulosonate cytidylyltransferase (268 aa).

Belongs to the KdsB family.

It localises to the cytoplasm. The enzyme catalyses 3-deoxy-alpha-D-manno-oct-2-ulosonate + CTP = CMP-3-deoxy-beta-D-manno-octulosonate + diphosphate. The protein operates within nucleotide-sugar biosynthesis; CMP-3-deoxy-D-manno-octulosonate biosynthesis; CMP-3-deoxy-D-manno-octulosonate from 3-deoxy-D-manno-octulosonate and CTP: step 1/1. It functions in the pathway bacterial outer membrane biogenesis; lipopolysaccharide biosynthesis. Activates KDO (a required 8-carbon sugar) for incorporation into bacterial lipopolysaccharide in Gram-negative bacteria. The protein is 3-deoxy-manno-octulosonate cytidylyltransferase of Ralstonia nicotianae (strain ATCC BAA-1114 / GMI1000) (Ralstonia solanacearum).